The following is a 494-amino-acid chain: ATP synthase subunit beta, plastid (494 aa).

Position 169-176 (169-176 (GGAGVGKT)) interacts with ATP.

It belongs to the ATPase alpha/beta chains family. F-type ATPases have 2 components, CF(1) - the catalytic core - and CF(0) - the membrane proton channel. CF(1) has five subunits: alpha(3), beta(3), gamma(1), delta(1), epsilon(1). CF(0) has four main subunits: a(1), b(1), b'(1) and c(9-12).

It localises to the plastid membrane. It catalyses the reaction ATP + H2O + 4 H(+)(in) = ADP + phosphate + 5 H(+)(out). Functionally, produces ATP from ADP in the presence of a proton gradient across the membrane. The catalytic sites are hosted primarily by the beta subunits. The chain is ATP synthase subunit beta, plastid (atpB) from Cuscuta sandwichiana (Kauna'oa).